Consider the following 322-residue polypeptide: Tubulin alpha-4 chain (322 aa).

Positions 15, 19, 20, 54, 81, and 103 each coordinate GTP. Residue Glu-129 is part of the active site.

It belongs to the tubulin family. Dimer of alpha and beta chains. A typical microtubule is a hollow water-filled tube with an outer diameter of 25 nm and an inner diameter of 15 nM. Alpha-beta heterodimers associate head-to-tail to form protofilaments running lengthwise along the microtubule wall with the beta-tubulin subunit facing the microtubule plus end conferring a structural polarity. Microtubules usually have 13 protofilaments but different protofilament numbers can be found in some organisms and specialized cells. Mg(2+) is required as a cofactor. Some glutamate residues at the C-terminus are polyglycylated, resulting in polyglycine chains on the gamma-carboxyl group. Glycylation is mainly limited to tubulin incorporated into axonemes (cilia and flagella) whereas glutamylation is prevalent in neuronal cells, centrioles, axonemes, and the mitotic spindle. Both modifications can coexist on the same protein on adjacent residues, and lowering polyglycylation levels increases polyglutamylation, and reciprocally. The precise function of polyglycylation is still unclear. Post-translationally, some glutamate residues at the C-terminus are polyglutamylated, resulting in polyglutamate chains on the gamma-carboxyl group. Polyglutamylation plays a key role in microtubule severing by spastin (SPAST). SPAST preferentially recognizes and acts on microtubules decorated with short polyglutamate tails: severing activity by SPAST increases as the number of glutamates per tubulin rises from one to eight, but decreases beyond this glutamylation threshold.

The protein resides in the cytoplasm. It localises to the cytoskeleton. It carries out the reaction GTP + H2O = GDP + phosphate + H(+). Tubulin is the major constituent of microtubules, a cylinder consisting of laterally associated linear protofilaments composed of alpha- and beta-tubulin heterodimers. Microtubules grow by the addition of GTP-tubulin dimers to the microtubule end, where a stabilizing cap forms. Below the cap, tubulin dimers are in GDP-bound state, owing to GTPase activity of alpha-tubulin. This Gallus gallus (Chicken) protein is Tubulin alpha-4 chain.